The following is a 252-amino-acid chain: Curing of [URE3] protein 1 (252 aa).

Its subcellular location is the nucleus. Its function is as follows. Involved in the curing of prion [URE3]. Nuclear localization of this protein may suggest a role in transcription regulation, so it might exert an effect on [URE3] through known prion-curing chaperones or BTN2. In Saccharomyces cerevisiae (strain ATCC 204508 / S288c) (Baker's yeast), this protein is Curing of [URE3] protein 1 (CUR1).